The primary structure comprises 454 residues: Exodeoxyribonuclease 7 large subunit (454 aa).

Over residues 337–352 (ANQRQQRASQRLRQQN) the composition is skewed to low complexity. Residues 337–359 (ANQRQQRASQRLRQQNPQPRIHR) are disordered.

The protein belongs to the XseA family. Heterooligomer composed of large and small subunits.

It localises to the cytoplasm. It carries out the reaction Exonucleolytic cleavage in either 5'- to 3'- or 3'- to 5'-direction to yield nucleoside 5'-phosphates.. Functionally, bidirectionally degrades single-stranded DNA into large acid-insoluble oligonucleotides, which are then degraded further into small acid-soluble oligonucleotides. The chain is Exodeoxyribonuclease 7 large subunit from Salmonella arizonae (strain ATCC BAA-731 / CDC346-86 / RSK2980).